The primary structure comprises 125 residues: Mini-ribonuclease 3 (125 aa).

Aspartate 11 is a catalytic residue.

The protein belongs to the MrnC RNase family. Homodimer. It depends on Mg(2+) as a cofactor.

The protein localises to the cytoplasm. Involved in correct processing of both the 5' and 3' ends of 23S rRNA precursor. Processes 30S rRNA precursor transcript even in absence of ribonuclease 3 (Rnc); Rnc processes 30S rRNA into smaller rRNA precursors. In Acholeplasma laidlawii (strain PG-8A), this protein is Mini-ribonuclease 3.